The sequence spans 152 residues: MSTINTDTNETMPHISVNAQYIKDLSLENPSAPSSLAALDQRPQIDLSLDINITNLSEESFYEVELNIEAIARNEKYKLFQVELKYAGVFNLINIDSEQHPVLLSVHCPAMIFPFARKIIASCTQDAGFQPLMIDPIDFGALYHKKMSEHQN.

It belongs to the SecB family. Homotetramer, a dimer of dimers. One homotetramer interacts with 1 SecA dimer.

The protein resides in the cytoplasm. One of the proteins required for the normal export of preproteins out of the cell cytoplasm. It is a molecular chaperone that binds to a subset of precursor proteins, maintaining them in a translocation-competent state. It also specifically binds to its receptor SecA. The chain is Protein-export protein SecB from Rickettsia rickettsii (strain Iowa).